A 337-amino-acid chain; its full sequence is Glycerol-3-phosphate dehydrogenase [NAD(P)+] (337 aa).

Residues S12, W13, and K110 each contribute to the NADPH site. 3 residues coordinate sn-glycerol 3-phosphate: K110, G141, and S143. Residue A145 participates in NADPH binding. 5 residues coordinate sn-glycerol 3-phosphate: K196, D249, S259, R260, and N261. Residue K196 is the Proton acceptor of the active site. Position 260 (R260) interacts with NADPH. Residues V284 and E286 each contribute to the NADPH site.

Belongs to the NAD-dependent glycerol-3-phosphate dehydrogenase family.

The protein resides in the cytoplasm. It catalyses the reaction sn-glycerol 3-phosphate + NAD(+) = dihydroxyacetone phosphate + NADH + H(+). It carries out the reaction sn-glycerol 3-phosphate + NADP(+) = dihydroxyacetone phosphate + NADPH + H(+). It functions in the pathway membrane lipid metabolism; glycerophospholipid metabolism. In terms of biological role, catalyzes the reduction of the glycolytic intermediate dihydroxyacetone phosphate (DHAP) to sn-glycerol 3-phosphate (G3P), the key precursor for phospholipid synthesis. This Levilactobacillus brevis (strain ATCC 367 / BCRC 12310 / CIP 105137 / JCM 1170 / LMG 11437 / NCIMB 947 / NCTC 947) (Lactobacillus brevis) protein is Glycerol-3-phosphate dehydrogenase [NAD(P)+].